A 204-amino-acid chain; its full sequence is Holliday junction branch migration complex subunit RuvA (204 aa).

Residues 1–67 are domain I; sequence MIDYLYGTLD…GGVISLYGFF (67 aa). The tract at residues 68–149 is domain II; sequence TIEEREMYLL…TVNVLNKEKQ (82 aa). Residues 150 to 154 form a flexible linker region; that stretch reads TGAET. Residues 155-204 are domain III; the sequence is IKNTMVSEAIAGLITLGYKMQQARVAVTNVYEHNENITLEDLIKKSLQYL.

Belongs to the RuvA family. As to quaternary structure, homotetramer. Forms an RuvA(8)-RuvB(12)-Holliday junction (HJ) complex. HJ DNA is sandwiched between 2 RuvA tetramers; dsDNA enters through RuvA and exits via RuvB. An RuvB hexamer assembles on each DNA strand where it exits the tetramer. Each RuvB hexamer is contacted by two RuvA subunits (via domain III) on 2 adjacent RuvB subunits; this complex drives branch migration. In the full resolvosome a probable DNA-RuvA(4)-RuvB(12)-RuvC(2) complex forms which resolves the HJ.

The protein resides in the cytoplasm. Its function is as follows. The RuvA-RuvB-RuvC complex processes Holliday junction (HJ) DNA during genetic recombination and DNA repair, while the RuvA-RuvB complex plays an important role in the rescue of blocked DNA replication forks via replication fork reversal (RFR). RuvA specifically binds to HJ cruciform DNA, conferring on it an open structure. The RuvB hexamer acts as an ATP-dependent pump, pulling dsDNA into and through the RuvAB complex. HJ branch migration allows RuvC to scan DNA until it finds its consensus sequence, where it cleaves and resolves the cruciform DNA. The chain is Holliday junction branch migration complex subunit RuvA from Endomicrobium trichonymphae.